The sequence spans 304 residues: Probable endonuclease 4 (304 aa).

Zn(2+)-binding residues include H75, H115, E151, D185, H188, H221, D234, H236, and E266.

This sequence belongs to the AP endonuclease 2 family. Requires Zn(2+) as cofactor.

It catalyses the reaction Endonucleolytic cleavage to 5'-phosphooligonucleotide end-products.. In terms of biological role, endonuclease IV plays a role in DNA repair. It cleaves phosphodiester bonds at apurinic or apyrimidinic (AP) sites, generating a 3'-hydroxyl group and a 5'-terminal sugar phosphate. This chain is Probable endonuclease 4, found in Ureaplasma urealyticum serovar 10 (strain ATCC 33699 / Western).